The chain runs to 99 residues: Defensin-like protein 2 (99 aa).

An N-terminal signal peptide occupies residues 1 to 30; that stretch reads MAMAKKSVSSFTLIFILVLVIFEVPEIKAQ. 4 disulfides stabilise this stretch: C34/C86, C47/C71, C56/C81, and C60/C83. Positions 94 to 99 are excised as a propeptide; that stretch reads ILRGGI.

This sequence belongs to the DEFL family. Protease inhibitor I18 (RTI/MTI-2) subfamily.

The protein localises to the secreted. Inhibits bovine beta-trypsin and alpha-chymotrypsin on a 1:1 molar basis. In Sinapis alba (White mustard), this protein is Defensin-like protein 2.